A 203-amino-acid polypeptide reads, in one-letter code: ATP-dependent Clp protease proteolytic subunit (203 aa).

S107 acts as the Nucleophile in catalysis. Residue H132 is part of the active site.

It belongs to the peptidase S14 family. Fourteen ClpP subunits assemble into 2 heptameric rings which stack back to back to give a disk-like structure with a central cavity, resembling the structure of eukaryotic proteasomes.

Its subcellular location is the cytoplasm. The catalysed reaction is Hydrolysis of proteins to small peptides in the presence of ATP and magnesium. alpha-casein is the usual test substrate. In the absence of ATP, only oligopeptides shorter than five residues are hydrolyzed (such as succinyl-Leu-Tyr-|-NHMec, and Leu-Tyr-Leu-|-Tyr-Trp, in which cleavage of the -Tyr-|-Leu- and -Tyr-|-Trp bonds also occurs).. In terms of biological role, cleaves peptides in various proteins in a process that requires ATP hydrolysis. Has a chymotrypsin-like activity. Plays a major role in the degradation of misfolded proteins. The chain is ATP-dependent Clp protease proteolytic subunit from Shewanella frigidimarina (strain NCIMB 400).